We begin with the raw amino-acid sequence, 57 residues long: MAKAKGNREKIKLVSSAKTGHFYTTEKNKRNMPEKMEIKKFDPVIRQHVIYKEAKIK.

This sequence belongs to the bacterial ribosomal protein bL33 family.

The sequence is that of Large ribosomal subunit protein bL33 from Shewanella sp. (strain W3-18-1).